The chain runs to 147 residues: Large ribosomal subunit protein uL16 (147 aa).

The segment covering 1–16 (MLMPKRVKRRRVHRGR) has biased composition (basic residues). The interval 1-20 (MLMPKRVKRRRVHRGRMTGQ) is disordered.

This sequence belongs to the universal ribosomal protein uL16 family. As to quaternary structure, part of the 50S ribosomal subunit.

In terms of biological role, binds 23S rRNA and is also seen to make contacts with the A and possibly P site tRNAs. This Alkaliphilus metalliredigens (strain QYMF) protein is Large ribosomal subunit protein uL16.